The chain runs to 331 residues: MPTLKELIAKLPKAELHLHIEGSLEPELMFELAQKNRIPLPYKSVEEVRKAYSFTSLQSFLDIYYAGAKVLLTESDFFDLAWAYLLRCKAQNICHTEIFFDPQTHTSRGVSFETVIEGITKALEKGEKELGISSFLIMCFLRHLSESEGFEILKSSLPFREKILGVGLDSSEVGHPPSKFERLFLECRKAGYKIVAHAGEEGDSSYIWEAIHKLQVERIDHGIRCEEDENLVEWLIQKQTPLTVCPLSNVKLQAVKNLSEHNILRLLRKGVLVTVNSDDPAYFGGYLNENYEALSEHLNASKEELKALAINSFKASFLSEEKKMDWIKQII.

3 residues coordinate Zn(2+): His17, His19, and His197. The active-site Proton donor is Glu200. Asp278 is a binding site for Zn(2+). A substrate-binding site is contributed by Asp279.

It belongs to the metallo-dependent hydrolases superfamily. Adenosine and AMP deaminases family. Adenine deaminase type 2 subfamily. The cofactor is Zn(2+).

It carries out the reaction adenine + H2O + H(+) = hypoxanthine + NH4(+). Catalyzes the hydrolytic deamination of adenine to hypoxanthine. Plays an important role in the purine salvage pathway and in nitrogen catabolism. This Wolinella succinogenes (strain ATCC 29543 / DSM 1740 / CCUG 13145 / JCM 31913 / LMG 7466 / NCTC 11488 / FDC 602W) (Vibrio succinogenes) protein is Adenine deaminase.